A 330-amino-acid chain; its full sequence is G-protein coupled receptor 74 (330 aa).

A run of 7 helical transmembrane segments spans residues 50–70, 85–105, 121–141, 160–180, 210–230, 252–272, and 295–315; these read LIVVPCLVILLVFCLIGNLWL, FILILMCLNSFWGCLCMIFSI, MVVFWVYVFFDMFLICWLCFD, WVFCTVALIILAFILSMQKAL, VAVSVNVLGFLLPLLFLCIFY, MLLFVFMFLLTWGPYYILSFI, and LPLLGLWGMAHGGLQVFIYIL. Cys-117 and Cys-195 are joined by a disulfide.

This sequence belongs to the G-protein coupled receptor 1 family.

It localises to the host membrane. This chain is G-protein coupled receptor 74 (74), found in Equus caballus (Horse).